Consider the following 288-residue polypeptide: Formamidopyrimidine-DNA glycosylase (288 aa).

P2 acts as the Schiff-base intermediate with DNA in catalysis. The active-site Proton donor is E3. K58 functions as the Proton donor; for beta-elimination activity in the catalytic mechanism. The DNA site is built by H99, R118, and K161. The segment at 252–288 (RVYDREAEPCPREGCGGTIKRIVQAGRSTFFCAKCQR) adopts an FPG-type zinc-finger fold. Catalysis depends on R278, which acts as the Proton donor; for delta-elimination activity.

Belongs to the FPG family. Monomer. Requires Zn(2+) as cofactor.

It catalyses the reaction Hydrolysis of DNA containing ring-opened 7-methylguanine residues, releasing 2,6-diamino-4-hydroxy-5-(N-methyl)formamidopyrimidine.. It carries out the reaction 2'-deoxyribonucleotide-(2'-deoxyribose 5'-phosphate)-2'-deoxyribonucleotide-DNA = a 3'-end 2'-deoxyribonucleotide-(2,3-dehydro-2,3-deoxyribose 5'-phosphate)-DNA + a 5'-end 5'-phospho-2'-deoxyribonucleoside-DNA + H(+). Functionally, involved in base excision repair of DNA damaged by oxidation or by mutagenic agents. Acts as a DNA glycosylase that recognizes and removes damaged bases. Has a preference for oxidized purines, such as 7,8-dihydro-8-oxoguanine (8-oxoG). Has AP (apurinic/apyrimidinic) lyase activity and introduces nicks in the DNA strand. Cleaves the DNA backbone by beta-delta elimination to generate a single-strand break at the site of the removed base with both 3'- and 5'-phosphates. This Beijerinckia indica subsp. indica (strain ATCC 9039 / DSM 1715 / NCIMB 8712) protein is Formamidopyrimidine-DNA glycosylase.